We begin with the raw amino-acid sequence, 77 residues long: Omega-conotoxin-like SO-5 (77 aa).

Residues Met1 to Ala22 form the signal peptide. The propeptide occupies Asp23–Lys42. 3 disulfide bridges follow: Cys46-Cys61, Cys53-Cys64, and Cys60-Cys71.

The protein belongs to the conotoxin O1 superfamily. As to expression, expressed by the venom duct.

The protein resides in the secreted. In terms of biological role, omega-conotoxins act at presynaptic membranes, they bind and block voltage-gated calcium channels (Cav). The sequence is that of Omega-conotoxin-like SO-5 (SO5) from Conus striatus (Striated cone).